The chain runs to 335 residues: Lipoyl synthase (335 aa).

Positions 1-13 are enriched in polar residues; sequence MTIDTNPESSTPS. Residues 1-29 are disordered; sequence MTIDTNPESSTPSAPAYNPSEKQKGSAKT. Cys75, Cys80, Cys86, Cys101, Cys105, Cys108, and Ser315 together coordinate [4Fe-4S] cluster. The 219-residue stretch at 86 to 304 folds into the Radical SAM core domain; it reads CFGKGTATFM…EEEAYKMGFA (219 aa).

Belongs to the radical SAM superfamily. Lipoyl synthase family. Requires [4Fe-4S] cluster as cofactor.

The protein resides in the cytoplasm. It catalyses the reaction [[Fe-S] cluster scaffold protein carrying a second [4Fe-4S](2+) cluster] + N(6)-octanoyl-L-lysyl-[protein] + 2 oxidized [2Fe-2S]-[ferredoxin] + 2 S-adenosyl-L-methionine + 4 H(+) = [[Fe-S] cluster scaffold protein] + N(6)-[(R)-dihydrolipoyl]-L-lysyl-[protein] + 4 Fe(3+) + 2 hydrogen sulfide + 2 5'-deoxyadenosine + 2 L-methionine + 2 reduced [2Fe-2S]-[ferredoxin]. The protein operates within protein modification; protein lipoylation via endogenous pathway; protein N(6)-(lipoyl)lysine from octanoyl-[acyl-carrier-protein]: step 2/2. In terms of biological role, catalyzes the radical-mediated insertion of two sulfur atoms into the C-6 and C-8 positions of the octanoyl moiety bound to the lipoyl domains of lipoate-dependent enzymes, thereby converting the octanoylated domains into lipoylated derivatives. The protein is Lipoyl synthase of Herminiimonas arsenicoxydans.